Reading from the N-terminus, the 207-residue chain is Protein-L-isoaspartate O-methyltransferase (207 aa).

Ser56 is an active-site residue.

It belongs to the methyltransferase superfamily. L-isoaspartyl/D-aspartyl protein methyltransferase family.

The protein localises to the cytoplasm. It carries out the reaction [protein]-L-isoaspartate + S-adenosyl-L-methionine = [protein]-L-isoaspartate alpha-methyl ester + S-adenosyl-L-homocysteine. Catalyzes the methyl esterification of L-isoaspartyl residues in peptides and proteins that result from spontaneous decomposition of normal L-aspartyl and L-asparaginyl residues. It plays a role in the repair and/or degradation of damaged proteins. In Pyrobaculum islandicum (strain DSM 4184 / JCM 9189 / GEO3), this protein is Protein-L-isoaspartate O-methyltransferase.